Consider the following 218-residue polypeptide: Protein-L-isoaspartate O-methyltransferase (218 aa).

S63 is a catalytic residue.

Belongs to the methyltransferase superfamily. L-isoaspartyl/D-aspartyl protein methyltransferase family.

The protein resides in the cytoplasm. It carries out the reaction [protein]-L-isoaspartate + S-adenosyl-L-methionine = [protein]-L-isoaspartate alpha-methyl ester + S-adenosyl-L-homocysteine. Catalyzes the methyl esterification of L-isoaspartyl residues in peptides and proteins that result from spontaneous decomposition of normal L-aspartyl and L-asparaginyl residues. It plays a role in the repair and/or degradation of damaged proteins. The protein is Protein-L-isoaspartate O-methyltransferase of Syntrophus aciditrophicus (strain SB).